Consider the following 156-residue polypeptide: MPRRREVPKRDVLPDPKFGSVELTKFMNVLMIDGKKSVAERIVYGALEQIEKKTGKAAIEVFNEAIANSKPIVEVKSRRVGGANYQVPVEVRPSRRLALAMRWVRDAARKRGEKSMDLRLAGELIDASEGRGGALKKREEVHRMAEANKAFSHFRF.

This sequence belongs to the universal ribosomal protein uS7 family. In terms of assembly, part of the 30S ribosomal subunit. Contacts proteins S9 and S11.

Functionally, one of the primary rRNA binding proteins, it binds directly to 16S rRNA where it nucleates assembly of the head domain of the 30S subunit. Is located at the subunit interface close to the decoding center, probably blocks exit of the E-site tRNA. The chain is Small ribosomal subunit protein uS7 from Neisseria gonorrhoeae (strain ATCC 700825 / FA 1090).